The sequence spans 461 residues: tRNA modification GTPase MnmE (461 aa).

3 residues coordinate (6S)-5-formyl-5,6,7,8-tetrahydrofolate: Arg-23, Glu-88, and Arg-127. The region spanning 223-382 (GLNTVIVGKP…VEEALVEIVY (160 aa)) is the TrmE-type G domain. Asn-233 contacts K(+). Residues 233-238 (NVGKSS), 252-258 (TEVPGTT), and 277-280 (DTAG) contribute to the GTP site. Residue Ser-237 coordinates Mg(2+). Residues Thr-252, Val-254, and Thr-257 each contribute to the K(+) site. Position 258 (Thr-258) interacts with Mg(2+). Lys-461 contributes to the (6S)-5-formyl-5,6,7,8-tetrahydrofolate binding site.

The protein belongs to the TRAFAC class TrmE-Era-EngA-EngB-Septin-like GTPase superfamily. TrmE GTPase family. As to quaternary structure, homodimer. Heterotetramer of two MnmE and two MnmG subunits. The cofactor is K(+).

Its subcellular location is the cytoplasm. In terms of biological role, exhibits a very high intrinsic GTPase hydrolysis rate. Involved in the addition of a carboxymethylaminomethyl (cmnm) group at the wobble position (U34) of certain tRNAs, forming tRNA-cmnm(5)s(2)U34. This Alkaliphilus metalliredigens (strain QYMF) protein is tRNA modification GTPase MnmE.